The sequence spans 784 residues: Probable phosphoketolase (784 aa).

Belongs to the XFP family. Requires thiamine diphosphate as cofactor.

This Rhodopseudomonas palustris (strain HaA2) protein is Probable phosphoketolase.